The sequence spans 136 residues: Histone H3.1t (136 aa).

A disordered region spans residues 1-43; it reads MARTKQTARKSTGGKAPRKQLATKVARKSAPATGGVKKPHRYR. The residue at position 3 (R3) is an Asymmetric dimethylarginine; by PRMT6; alternate. The residue at position 3 (R3) is a Citrulline; alternate. T4 is modified (phosphothreonine; by HASPIN). Allysine; alternate is present on K5. N6,N6,N6-trimethyllysine; alternate is present on K5. At K5 the chain carries N6,N6-dimethyllysine; alternate. At K5 the chain carries N6-(2-hydroxyisobutyryl)lysine; alternate. N6-(beta-hydroxybutyryl)lysine; alternate is present on K5. K5 is modified (N6-acetyllysine; alternate). The residue at position 5 (K5) is an N6-methyllysine; alternate. Q6 bears the 5-glutamyl dopamine; alternate mark. Position 6 is a 5-glutamyl serotonin; alternate (Q6). Phosphothreonine; by PKC is present on T7. Position 9 is a citrulline; alternate (R9). Symmetric dimethylarginine; by PRMT5; alternate is present on R9. Position 10 is an N6,N6,N6-trimethyllysine; alternate (K10). Position 10 is an N6,N6-dimethyllysine; alternate (K10). K10 is modified (N6-(2-hydroxyisobutyryl)lysine; alternate). K10 is subject to N6-(beta-hydroxybutyryl)lysine; alternate. Residue K10 is modified to N6-acetyllysine; alternate. The residue at position 10 (K10) is an N6-methyllysine; alternate. K10 carries the N6-lactoyllysine; alternate modification. At S11 the chain carries ADP-ribosylserine; alternate. Residue S11 is modified to Phosphoserine; alternate; by AURKB, AURKC, RPS6KA3, RPS6KA4 and RPS6KA5. T12 carries the post-translational modification Phosphothreonine; by PKC. K15 bears the N6-(2-hydroxyisobutyryl)lysine; alternate mark. An N6-(beta-hydroxybutyryl)lysine; alternate modification is found at K15. Residue K15 is modified to N6-acetyllysine; alternate. N6-lactoyllysine; alternate is present on K15. N6-glutaryllysine; alternate is present on K15. Residue K15 is modified to N6-succinyllysine; alternate. A Citrulline; alternate modification is found at R18. R18 is modified (asymmetric dimethylarginine; by CARM1; alternate). K19 and K24 each carry N6-(2-hydroxyisobutyryl)lysine; alternate. Residues K19 and K24 each carry the N6-(beta-hydroxybutyryl)lysine; alternate modification. An N6-acetyllysine; alternate mark is found at K19 and K24. N6-methyllysine; alternate is present on residues K19 and K24. N6-lactoyllysine; alternate occurs at positions 19 and 24. 2 positions are modified to N6-glutaryllysine; alternate: K19 and K24. Residues K19 and K24 each carry the N6-butyryllysine; alternate modification. Citrulline is present on R27. The residue at position 28 (K28) is an N6,N6,N6-trimethyllysine; alternate. At K28 the chain carries N6,N6-dimethyllysine; alternate. K28 is modified (N6-(2-hydroxyisobutyryl)lysine; alternate). K28 carries the post-translational modification N6-acetyllysine; alternate. K28 bears the N6-methyllysine; alternate mark. K28 carries the N6-lactoyllysine; alternate modification. Position 28 is an N6-glutaryllysine; alternate (K28). The residue at position 29 (S29) is an ADP-ribosylserine; alternate. A Phosphoserine; alternate; by AURKB, AURKC and RPS6KA5 modification is found at S29. K37 carries the N6,N6,N6-trimethyllysine; alternate modification. K37 is modified (N6,N6-dimethyllysine; alternate). Residue K37 is modified to N6-(2-hydroxyisobutyryl)lysine; alternate. Position 37 is an N6-acetyllysine; alternate (K37). K37 is modified (N6-methyllysine; alternate). K38 carries the N6-methyllysine modification. At Y42 the chain carries Phosphotyrosine. An N6,N6,N6-trimethyllysine; alternate modification is found at K57. N6-(2-hydroxyisobutyryl)lysine; alternate is present on K57. At K57 the chain carries N6-(beta-hydroxybutyryl)lysine; alternate. Position 57 is an N6-acetyllysine; alternate (K57). K57 carries the post-translational modification N6-lactoyllysine; alternate. K57 is subject to N6-glutaryllysine; alternate. K57 is subject to N6-succinyllysine; alternate. K57 is modified (N6-methyllysine; by EHMT2; alternate). Phosphoserine is present on S58. Residues K65 and K80 each carry the N6-(2-hydroxyisobutyryl)lysine; alternate modification. K65 and K80 each carry N6-methyllysine; alternate. K80 is subject to N6,N6,N6-trimethyllysine; alternate. K80 bears the N6,N6-dimethyllysine; alternate mark. N6-acetyllysine; alternate is present on K80. K80 is modified (N6-lactoyllysine; alternate). The residue at position 80 (K80) is an N6-glutaryllysine; alternate. K80 is modified (N6-succinyllysine; alternate). At T81 the chain carries Phosphothreonine. S87 carries the phosphoserine modification. A Phosphothreonine modification is found at T108. 2 positions are modified to N6-acetyllysine; alternate: K116 and K123. N6-glutaryllysine; alternate occurs at positions 116 and 123. K123 carries the N6-(2-hydroxyisobutyryl)lysine; alternate modification. K123 is modified (N6-methyllysine; alternate). K123 bears the N6-succinyllysine; alternate mark.

It belongs to the histone H3 family. The nucleosome is a histone octamer containing two molecules each of H2A, H2B, H3 and H4 assembled in one H3-H4 heterotetramer and two H2A-H2B heterodimers. The octamer wraps approximately 147 bp of DNA. Interacts with TONSL; CHAF1A and CHAF1B. Acetylation is generally linked to gene activation. Acetylation on Lys-10 (H3K9ac) impairs methylation at Arg-9 (H3R8me2s). Acetylation on Lys-19 (H3K18ac) and Lys-24 (H3K24ac) favors methylation at Arg-18 (H3R17me). Acetylation at Lys-123 (H3K122ac) by EP300/p300 plays a central role in chromatin structure: localizes at the surface of the histone octamer and stimulates transcription, possibly by promoting nucleosome instability. In terms of processing, citrullination at Arg-9 (H3R8ci) and/or Arg-18 (H3R17ci) by PADI4 impairs methylation and represses transcription. Post-translationally, asymmetric dimethylation at Arg-18 (H3R17me2a) by CARM1 is linked to gene activation. Symmetric dimethylation at Arg-9 (H3R8me2s) by PRMT5 is linked to gene repression. Asymmetric dimethylation at Arg-3 (H3R2me2a) by PRMT6 is linked to gene repression and is mutually exclusive with H3 Lys-5 methylation (H3K4me2 and H3K4me3). H3R2me2a is present at the 3' of genes regardless of their transcription state and is enriched on inactive promoters, while it is absent on active promoters. Methylation at Lys-5 (H3K4me), Lys-37 (H3K36me) and Lys-80 (H3K79me) are linked to gene activation. Methylation at Lys-5 (H3K4me) facilitates subsequent acetylation of H3 and H4. Methylation at Lys-80 (H3K79me) is associated with DNA double-strand break (DSB) responses and is a specific target for TP53BP1. Methylation at Lys-10 (H3K9me) and Lys-28 (H3K27me) are linked to gene repression. Methylation at Lys-10 (H3K9me) is a specific target for HP1 proteins (CBX1, CBX3 and CBX5) and prevents subsequent phosphorylation at Ser-11 (H3S10ph) and acetylation of H3 and H4. Methylation at Lys-5 (H3K4me) and Lys-80 (H3K79me) require preliminary monoubiquitination of H2B at 'Lys-120'. Methylation at Lys-10 (H3K9me) and Lys-28 (H3K27me) are enriched in inactive X chromosome chromatin. Monomethylation at Lys-57 (H3K56me1) by EHMT2/G9A in G1 phase promotes interaction with PCNA and is required for DNA replication. In terms of processing, phosphorylated at Thr-4 (H3T3ph) by HASPIN during prophase and dephosphorylated during anaphase. Phosphorylation at Ser-11 (H3S10ph) by AURKB is crucial for chromosome condensation and cell-cycle progression during mitosis and meiosis. In addition phosphorylation at Ser-11 (H3S10ph) by RPS6KA4 and RPS6KA5 is important during interphase because it enables the transcription of genes following external stimulation, like mitogens, stress, growth factors or UV irradiation and result in the activation of genes, such as c-fos and c-jun. Phosphorylation at Ser-11 (H3S10ph), which is linked to gene activation, prevents methylation at Lys-10 (H3K9me) but facilitates acetylation of H3 and H4. Phosphorylation at Ser-11 (H3S10ph) by AURKB mediates the dissociation of HP1 proteins (CBX1, CBX3 and CBX5) from heterochromatin. Phosphorylation at Ser-11 (H3S10ph) is also an essential regulatory mechanism for neoplastic cell transformation. Phosphorylated at Ser-29 (H3S28ph) by MAP3K20 isoform 1, RPS6KA5 or AURKB during mitosis or upon ultraviolet B irradiation. Phosphorylation at Thr-7 (H3T6ph) by PRKCB is a specific tag for epigenetic transcriptional activation that prevents demethylation of Lys-5 (H3K4me) by LSD1/KDM1A. At centromeres, specifically phosphorylated at Thr-12 (H3T11ph) from prophase to early anaphase, by DAPK3 and PKN1. Phosphorylation at Thr-12 (H3T11ph) by PKN1 or isoform M2 of PKM (PKM2) is a specific tag for epigenetic transcriptional activation that promotes demethylation of Lys-10 (H3K9me) by KDM4C/JMJD2C. Phosphorylation at Tyr-42 (H3Y41ph) by JAK2 promotes exclusion of CBX5 (HP1 alpha) from chromatin. Post-translationally, ubiquitinated. Lysine deamination at Lys-5 (H3K4all) to form allysine is mediated by LOXL2. Allysine formation by LOXL2 only takes place on H3K4me3 and results in gene repression. In terms of processing, butyrylation of histones marks active promoters and competes with histone acetylation. It is present during late spermatogenesis. Post-translationally, succinylation at Lys-80 (H3K79succ) by KAT2A takes place with a maximum frequency around the transcription start sites of genes. It gives a specific tag for epigenetic transcription activation. Desuccinylation at Lys-123 (H3K122succ) by SIRT7 in response to DNA damage promotes chromatin condensation and double-strand breaks (DSBs) repair. Serine ADP-ribosylation constitutes the primary form of ADP-ribosylation of proteins in response to DNA damage. Serine ADP-ribosylation at Ser-11 (H3S10ADPr) is mutually exclusive with phosphorylation at Ser-11 (H3S10ph) and impairs acetylation at Lys-10 (H3K9ac). As to expression, expressed in testicular cells.

It is found in the nucleus. The protein resides in the chromosome. Core component of nucleosome. Nucleosomes wrap and compact DNA into chromatin, limiting DNA accessibility to the cellular machineries which require DNA as a template. Histones thereby play a central role in transcription regulation, DNA repair, DNA replication and chromosomal stability. DNA accessibility is regulated via a complex set of post-translational modifications of histones, also called histone code, and nucleosome remodeling. In Homo sapiens (Human), this protein is Histone H3.1t.